The sequence spans 234 residues: Exotoxin type G (234 aa).

Residues methionine 1 to alanine 24 form the signal peptide.

It belongs to the staphylococcal/streptococcal toxin family.

Functionally, mitogenic for human peripheral blood lymphocytes. This is Exotoxin type G (speG) from Streptococcus pyogenes serotype M1.